Here is a 123-residue protein sequence, read N- to C-terminus: Holo-[acyl-carrier-protein] synthase (123 aa).

Mg(2+) contacts are provided by aspartate 8 and glutamate 55.

This sequence belongs to the P-Pant transferase superfamily. AcpS family. It depends on Mg(2+) as a cofactor.

The protein localises to the cytoplasm. The catalysed reaction is apo-[ACP] + CoA = holo-[ACP] + adenosine 3',5'-bisphosphate + H(+). In terms of biological role, transfers the 4'-phosphopantetheine moiety from coenzyme A to a Ser of acyl-carrier-protein. The chain is Holo-[acyl-carrier-protein] synthase from Caldicellulosiruptor saccharolyticus (strain ATCC 43494 / DSM 8903 / Tp8T 6331).